Here is a 101-residue protein sequence, read N- to C-terminus: A-type ATP synthase subunit F (101 aa).

It belongs to the V-ATPase F subunit family. In terms of assembly, has multiple subunits, A(3), B(3), C, D, E, F, G, I and K(x); there may be a few other subunits as well.

It localises to the cell membrane. Functionally, component of the A-type ATP synthase that produces ATP from ADP in the presence of a proton gradient across the membrane. The polypeptide is A-type ATP synthase subunit F (Methanosarcina mazei (strain ATCC BAA-159 / DSM 3647 / Goe1 / Go1 / JCM 11833 / OCM 88) (Methanosarcina frisia)).